The chain runs to 874 residues: Alanine--tRNA ligase (874 aa).

Positions 562, 566, 665, and 669 each coordinate Zn(2+).

This sequence belongs to the class-II aminoacyl-tRNA synthetase family. Zn(2+) is required as a cofactor.

It is found in the cytoplasm. It carries out the reaction tRNA(Ala) + L-alanine + ATP = L-alanyl-tRNA(Ala) + AMP + diphosphate. Its function is as follows. Catalyzes the attachment of alanine to tRNA(Ala) in a two-step reaction: alanine is first activated by ATP to form Ala-AMP and then transferred to the acceptor end of tRNA(Ala). Also edits incorrectly charged Ser-tRNA(Ala) and Gly-tRNA(Ala) via its editing domain. In Pseudomonas paraeruginosa (strain DSM 24068 / PA7) (Pseudomonas aeruginosa (strain PA7)), this protein is Alanine--tRNA ligase.